We begin with the raw amino-acid sequence, 124 residues long: Glycine cleavage system H protein (124 aa).

The region spanning 22 to 104 (VATVGITEFA…YGAGWLFRVE (83 aa)) is the Lipoyl-binding domain. Lys63 carries the post-translational modification N6-lipoyllysine.

The protein belongs to the GcvH family. In terms of assembly, the glycine cleavage system is composed of four proteins: P, T, L and H. (R)-lipoate serves as cofactor.

Its function is as follows. The glycine cleavage system catalyzes the degradation of glycine. The H protein shuttles the methylamine group of glycine from the P protein to the T protein. In Beutenbergia cavernae (strain ATCC BAA-8 / DSM 12333 / CCUG 43141 / JCM 11478 / NBRC 16432 / NCIMB 13614 / HKI 0122), this protein is Glycine cleavage system H protein.